The primary structure comprises 71 residues: NAD(P)H-quinone oxidoreductase subunit O (71 aa).

Belongs to the complex I NdhO subunit family. As to quaternary structure, NDH-1 can be composed of about 15 different subunits; different subcomplexes with different compositions have been identified which probably have different functions.

The protein resides in the cellular thylakoid membrane. It catalyses the reaction a plastoquinone + NADH + (n+1) H(+)(in) = a plastoquinol + NAD(+) + n H(+)(out). The enzyme catalyses a plastoquinone + NADPH + (n+1) H(+)(in) = a plastoquinol + NADP(+) + n H(+)(out). Functionally, NDH-1 shuttles electrons from an unknown electron donor, via FMN and iron-sulfur (Fe-S) centers, to quinones in the respiratory and/or the photosynthetic chain. The immediate electron acceptor for the enzyme in this species is believed to be plastoquinone. Couples the redox reaction to proton translocation, and thus conserves the redox energy in a proton gradient. Cyanobacterial NDH-1 also plays a role in inorganic carbon-concentration. The sequence is that of NAD(P)H-quinone oxidoreductase subunit O from Microcystis aeruginosa (strain NIES-843 / IAM M-2473).